We begin with the raw amino-acid sequence, 79 residues long: Delta-hormotoxin-Cpt1b (79 aa).

An N-terminal signal peptide occupies residues 1–20 (MKTQVLALFVLCVLFCLAES). The propeptide occupies 21–31 (RTTLNKRNDIE). Cystine bridges form between Cys-36-Cys-75, Cys-38-Cys-66, and Cys-56-Cys-76.

The protein belongs to the sea anemone sodium channel inhibitory toxin family.

Its subcellular location is the secreted. The protein localises to the nematocyst. In neuromuscular preparation of crustaceans, the toxin increased neurotransmitter release, causing repetitive firing of the axons. May affect sodium channels (Nav). The polypeptide is Delta-hormotoxin-Cpt1b (Calliactis parasitica (Sea anemone)).